The chain runs to 32 residues: Photosystem II reaction center protein T (32 aa).

The helical transmembrane segment at 3 to 23 (ALVYTFLLVATLGIIFFAIFF) threads the bilayer.

This sequence belongs to the PsbT family. PSII is composed of 1 copy each of membrane proteins PsbA, PsbB, PsbC, PsbD, PsbE, PsbF, PsbH, PsbI, PsbJ, PsbK, PsbL, PsbM, PsbT, PsbY, PsbZ, Psb30/Ycf12, at least 3 peripheral proteins of the oxygen-evolving complex and a large number of cofactors. It forms dimeric complexes.

Its subcellular location is the plastid. It is found in the chloroplast thylakoid membrane. Its function is as follows. Found at the monomer-monomer interface of the photosystem II (PS II) dimer, plays a role in assembly and dimerization of PSII. PSII is a light-driven water plastoquinone oxidoreductase, using light energy to abstract electrons from H(2)O, generating a proton gradient subsequently used for ATP formation. The polypeptide is Photosystem II reaction center protein T (Psilotum nudum (Whisk fern)).